A 61-amino-acid chain; its full sequence is uncharacterized protein (61 aa).

This is an uncharacterized protein from Bacillus subtilis (strain 168).